The chain runs to 22 residues: Phospholipase A2 (22 aa).

It belongs to the phospholipase A2 family. Group II subfamily. Ca(2+) is required as a cofactor. Post-translationally, seven disulfide bonds are present. In terms of tissue distribution, expressed by the venom gland.

Its subcellular location is the secreted. The enzyme catalyses a 1,2-diacyl-sn-glycero-3-phosphocholine + H2O = a 1-acyl-sn-glycero-3-phosphocholine + a fatty acid + H(+). Snake venom phospholipase A2 (PLA2) that inhibits neuromuscular transmission by blocking acetylcholine release from the nerve termini. PLA2 catalyzes the calcium-dependent hydrolysis of the 2-acyl groups in 3-sn-phosphoglycerides. This is Phospholipase A2 from Daboia siamensis (Eastern Russel's viper).